The chain runs to 157 residues: SsrA-binding protein (157 aa).

The disordered stretch occupies residues 133–157 (LHDKRETEKKRDWSREKGRLLRARG). Residues 135–151 (DKRETEKKRDWSREKGR) are compositionally biased toward basic and acidic residues.

Belongs to the SmpB family.

It localises to the cytoplasm. In terms of biological role, required for rescue of stalled ribosomes mediated by trans-translation. Binds to transfer-messenger RNA (tmRNA), required for stable association of tmRNA with ribosomes. tmRNA and SmpB together mimic tRNA shape, replacing the anticodon stem-loop with SmpB. tmRNA is encoded by the ssrA gene; the 2 termini fold to resemble tRNA(Ala) and it encodes a 'tag peptide', a short internal open reading frame. During trans-translation Ala-aminoacylated tmRNA acts like a tRNA, entering the A-site of stalled ribosomes, displacing the stalled mRNA. The ribosome then switches to translate the ORF on the tmRNA; the nascent peptide is terminated with the 'tag peptide' encoded by the tmRNA and targeted for degradation. The ribosome is freed to recommence translation, which seems to be the essential function of trans-translation. This chain is SsrA-binding protein, found in Bradyrhizobium diazoefficiens (strain JCM 10833 / BCRC 13528 / IAM 13628 / NBRC 14792 / USDA 110).